Consider the following 547-residue polypeptide: Intercellular adhesion molecule 3 (547 aa).

A signal peptide spans 1 to 29; the sequence is MATMVPSVLWPRACWTLLVCCLLTPGVQG. Topologically, residues 30 to 485 are extracellular; it reads QEFLLRVEPQ…VMDIEAGSSH (456 aa). Positions 46–103 constitute an Ig-like C2-type 1 domain; the sequence is GGSLFVNCSTDCPSSEKIALETSLSKELVASGMGWAAFNLSNVTGNSRILCSVYCNGS. N-linked (GlcNAc...) asparagine glycosylation is found at Asn52, Asn84, Asn87, Asn101, Asn110, and Asn134. 2 disulfides stabilise this stretch: Cys53/Cys96 and Cys57/Cys100. The Ig-like C2-type 2 domain occupies 132-197; it reads GQNFTLRCQV…FSCRTELDMQ (66 aa). A disulfide bond links Cys139 and Cys190. N-linked (GlcNAc...) asparagine glycans are attached at residues Asn206, Asn264, Asn295, Asn308, Asn320, Asn363, Asn389, Asn453, and Asn457. Positions 234 to 301 constitute an Ig-like C2-type 3 domain; that stretch reads ETSWPVDCTL…IVCNVTLGGE (68 aa). A disulfide bridge connects residues Cys241 and Cys294. The Ig-like C2-type 4 domain occupies 329–382; sequence GSTVTVSCMAGARVQVTLDGVPAAAPGQPAQLQLNATESDDRRSFFCSATLEVD. A disulfide bond links Cys336 and Cys375. The Ig-like C2-type 5 domain maps to 416–469; that stretch reads KTTHVLQCQARGNPYPELRCLKEGSSREVPVGIPFFVNVTHNGTYQCQASSSRG. Cysteines 423 and 462 form a disulfide. The helical transmembrane segment at 486–510 threads the bilayer; it reads FVPVFVAVLLTLGVVTIVLALMYVF. Residues 511-547 lie on the Cytoplasmic side of the membrane; the sequence is REHKRSGSYHVREESTYLPLTSMQPTQAMGEEPSRAE.

The protein belongs to the immunoglobulin superfamily. ICAM family. In terms of assembly, interacts with moesin/MSN. Upon stimulation by a physiologic stimuli becomes rapidly and transiently phosphorylated on serine residues. As to expression, leukocytes.

The protein resides in the membrane. In terms of biological role, ICAM proteins are ligands for the leukocyte adhesion protein LFA-1 (integrin alpha-L/beta-2). ICAM3 is also a ligand for integrin alpha-D/beta-2. In association with integrin alpha-L/beta-2, contributes to apoptotic neutrophil phagocytosis by macrophages. This is Intercellular adhesion molecule 3 (ICAM3) from Pan troglodytes (Chimpanzee).